A 472-amino-acid chain; its full sequence is UDP-N-acetylmuramate--L-alanine ligase (472 aa).

Residue 123 to 129 coordinates ATP; it reads GSHGKTT.

This sequence belongs to the MurCDEF family.

The protein localises to the cytoplasm. The catalysed reaction is UDP-N-acetyl-alpha-D-muramate + L-alanine + ATP = UDP-N-acetyl-alpha-D-muramoyl-L-alanine + ADP + phosphate + H(+). It functions in the pathway cell wall biogenesis; peptidoglycan biosynthesis. Its function is as follows. Cell wall formation. The chain is UDP-N-acetylmuramate--L-alanine ligase from Solibacter usitatus (strain Ellin6076).